A 58-amino-acid polypeptide reads, in one-letter code: UPF0434 protein Daro_3207 (58 aa).

It belongs to the UPF0434 family.

This chain is UPF0434 protein Daro_3207, found in Dechloromonas aromatica (strain RCB).